Reading from the N-terminus, the 523-residue chain is Ribonuclease Y (523 aa).

The chain crosses the membrane as a helical span at residues 3–23 (VWYAIGSIIFGLLVGVSVYLI). Positions 213–279 (LVNVINLPND…TKTIEKLVED (67 aa)) constitute a KH domain. In terms of domain architecture, HD spans 339 to 432 (ALGHSIEVAN…VCAADTLSAA (94 aa)).

This sequence belongs to the RNase Y family.

It localises to the cell membrane. Functionally, endoribonuclease that initiates mRNA decay. This chain is Ribonuclease Y, found in Helicobacter hepaticus (strain ATCC 51449 / 3B1).